A 239-amino-acid chain; its full sequence is Tetrahydromethanopterin S-methyltransferase subunit A (239 aa).

At methionine 1–serine 215 the chain is on the cytoplasmic side. Histidine 85 is a 5-hydroxybenzimidazolylcob(I)amide binding site. Residues glycine 216 to leucine 238 form a helical membrane-spanning segment. Position 239 (leucine 239) is a topological domain, extracellular.

This sequence belongs to the MtrA family. As to quaternary structure, the complex is composed of 8 subunits; MtrA, MtrB, MtrC, MtrD, MtrE, MtrF, MtrG and MtrH. It depends on 5-hydroxybenzimidazolylcob(I)amide as a cofactor.

The protein localises to the cell membrane. It carries out the reaction 5-methyl-5,6,7,8-tetrahydromethanopterin + coenzyme M + 2 Na(+)(in) = 5,6,7,8-tetrahydromethanopterin + methyl-coenzyme M + 2 Na(+)(out). The protein operates within one-carbon metabolism; methanogenesis from CO(2); methyl-coenzyme M from 5,10-methylene-5,6,7,8-tetrahydromethanopterin: step 2/2. Its function is as follows. Part of a complex that catalyzes the formation of methyl-coenzyme M and tetrahydromethanopterin from coenzyme M and methyl-tetrahydromethanopterin. This is an energy-conserving, sodium-ion translocating step. This chain is Tetrahydromethanopterin S-methyltransferase subunit A, found in Methanococcus maripaludis (strain DSM 14266 / JCM 13030 / NBRC 101832 / S2 / LL).